The primary structure comprises 913 residues: Protein translocase subunit SecA (913 aa).

ATP-binding positions include Q87, G105–T109, and D512. Residues C897, C899, C908, and H909 each contribute to the Zn(2+) site.

The protein belongs to the SecA family. In terms of assembly, monomer and homodimer. Part of the essential Sec protein translocation apparatus which comprises SecA, SecYEG and auxiliary proteins SecDF-YajC and YidC. Zn(2+) is required as a cofactor.

It is found in the cell inner membrane. The protein resides in the cytoplasm. It carries out the reaction ATP + H2O + cellular proteinSide 1 = ADP + phosphate + cellular proteinSide 2.. Functionally, part of the Sec protein translocase complex. Interacts with the SecYEG preprotein conducting channel. Has a central role in coupling the hydrolysis of ATP to the transfer of proteins into and across the cell membrane, serving both as a receptor for the preprotein-SecB complex and as an ATP-driven molecular motor driving the stepwise translocation of polypeptide chains across the membrane. The chain is Protein translocase subunit SecA from Pseudomonas savastanoi pv. phaseolicola (strain 1448A / Race 6) (Pseudomonas syringae pv. phaseolicola (strain 1448A / Race 6)).